The following is a 795-amino-acid chain: Phenylalanine--tRNA ligase beta subunit (795 aa).

The tRNA-binding domain maps to 39–148 (AGEFTGVKVG…EGTTLGADVR (110 aa)). The 76-residue stretch at 401–476 (PKANTVELRR…RIYGYNNIPN (76 aa)) folds into the B5 domain. Mg(2+)-binding residues include Asp-454, Asp-460, Glu-463, and Glu-464. The FDX-ACB domain maps to 701 to 794 (SKFPANRRDI…IGEKFSATLR (94 aa)).

It belongs to the phenylalanyl-tRNA synthetase beta subunit family. Type 1 subfamily. As to quaternary structure, tetramer of two alpha and two beta subunits. The cofactor is Mg(2+).

It is found in the cytoplasm. It catalyses the reaction tRNA(Phe) + L-phenylalanine + ATP = L-phenylalanyl-tRNA(Phe) + AMP + diphosphate + H(+). This Aliivibrio fischeri (strain ATCC 700601 / ES114) (Vibrio fischeri) protein is Phenylalanine--tRNA ligase beta subunit.